A 123-amino-acid chain; its full sequence is Small ribosomal subunit protein uS13 (123 aa).

The disordered stretch occupies residues 94 to 123 (RRGLPVRGQHTKNNARTRKGPARAIAGKKK).

Belongs to the universal ribosomal protein uS13 family. As to quaternary structure, part of the 30S ribosomal subunit. Forms a loose heterodimer with protein S19. Forms two bridges to the 50S subunit in the 70S ribosome.

Its function is as follows. Located at the top of the head of the 30S subunit, it contacts several helices of the 16S rRNA. In the 70S ribosome it contacts the 23S rRNA (bridge B1a) and protein L5 of the 50S subunit (bridge B1b), connecting the 2 subunits; these bridges are implicated in subunit movement. Contacts the tRNAs in the A and P-sites. This Oenococcus oeni (strain ATCC BAA-331 / PSU-1) protein is Small ribosomal subunit protein uS13.